The primary structure comprises 449 residues: Streptomycin-6-phosphate phosphatase (449 aa).

Positions 1–32 are cleaved as a signal peptide; sequence MRFAYGRLPWRRGAVLGSALLVLVTAPAASTA. D50 is a Mg(2+) binding site. A Zn(2+)-binding site is contributed by D50. Catalysis depends on S99, which acts as the Phosphoserine intermediate. Mg(2+) contacts are provided by D151 and T153. The segment at 268–290 is disordered; that stretch reads APGGTAPQRCATRNPGRPAGTPD. E321 contributes to the Mg(2+) binding site. D326, H330, D368, H369, and H412 together coordinate Zn(2+).

The protein belongs to the alkaline phosphatase family. Mg(2+) serves as cofactor. It depends on Zn(2+) as a cofactor.

It is found in the secreted. The catalysed reaction is streptomycin 6-phosphate + H2O = streptomycin + phosphate. The protein operates within antibiotic biosynthesis; streptomycin biosynthesis. Specifically cleaves both streptomycin-6-phosphate and, more slowly, streptomycin-3''-phosphate during the biosynthesis of streptomycin. This chain is Streptomycin-6-phosphate phosphatase (strK), found in Streptomyces griseus.